A 314-amino-acid polypeptide reads, in one-letter code: MPRRSTIALATAGALASTGTAYLGARNLLVGQATHARTVIPKSFDAPPRADGVYTRGGGPVQRWRREVPFDVHLMIFGDSTATGYGCASAEEVPGVLIARGLAEQTGKRIRLSTKAIVGATSKGVCGQVDAMFVVGPPPDAAVIMIGANDITALNGIGPSAQRLADCVRRLRTRGAVVVVGTCPDLGVITAIPQPLRALAHTRGVRLARAQTAAVKAAGGVPVPLGHLLAPKFRAMPELMFSADRYHPSAPAYALAADLLFLALRDALTEKLDIPIHETPSRPGTATLEPGHTRHSMMSRLRRPRPARAVPTGG.

The N-terminal stretch at 1–21 (MPRRSTIALATAGALASTGTA) is a signal peptide. Ser80 (nucleophile) is an active-site residue. The active-site Proton donor is Asp244. His247 serves as the catalytic Proton acceptor. The disordered stretch occupies residues 276-314 (IHETPSRPGTATLEPGHTRHSMMSRLRRPRPARAVPTGG). Residues 293–306 (TRHSMMSRLRRPRP) are compositionally biased toward basic residues.

This sequence belongs to the 'GDSL' lipolytic enzyme family.

The enzyme catalyses an acetyl ester + H2O = an aliphatic alcohol + acetate + H(+). It carries out the reaction a butanoate ester + H2O = an aliphatic alcohol + butanoate + H(+). It catalyses the reaction triacetin + H2O = diacetylglycerol + acetate + H(+). The catalysed reaction is 1,2,3-tributanoylglycerol + H2O = dibutanoylglycerol + butanoate + H(+). Its activity is regulated as follows. Esterase activity is significantly inhibited by the serine modifier phenylmethylsulfonyl fluoride (PMSF). Completely inhibited by diethyl pyrocarbonate. Esterase that preferentially hydrolyzes short-chain fatty acids, particularly pNP-acetate (C2) and pNP-butyrate (C4). Also has weak activity with pNP-hexanoate (C6) and pNP-octanoate (C8). It can also hydrolyze short-chain tryglycerides such as triacetin and tributyrin. Important for intracellular survival. The protein is GDSL-like esterase Rv1075c of Mycobacterium tuberculosis (strain ATCC 25618 / H37Rv).